The following is a 301-amino-acid chain: Methionyl-tRNA formyltransferase (301 aa).

A (6S)-5,6,7,8-tetrahydrofolate-binding site is contributed by 109 to 112 (SLLP).

Belongs to the Fmt family.

The catalysed reaction is L-methionyl-tRNA(fMet) + (6R)-10-formyltetrahydrofolate = N-formyl-L-methionyl-tRNA(fMet) + (6S)-5,6,7,8-tetrahydrofolate + H(+). Attaches a formyl group to the free amino group of methionyl-tRNA(fMet). The formyl group appears to play a dual role in the initiator identity of N-formylmethionyl-tRNA by promoting its recognition by IF2 and preventing the misappropriation of this tRNA by the elongation apparatus. The polypeptide is Methionyl-tRNA formyltransferase (Jannaschia sp. (strain CCS1)).